A 440-amino-acid polypeptide reads, in one-letter code: 23S rRNA (uracil(1939)-C(5))-methyltransferase RlmD (440 aa).

A TRAM domain is found at Pro-8–Lys-69. [4Fe-4S] cluster-binding residues include Cys-82, Cys-88, Cys-91, and Cys-169. Positions 272, 301, 306, 322, 349, and 370 each coordinate S-adenosyl-L-methionine. Cys-396 functions as the Nucleophile in the catalytic mechanism.

It belongs to the class I-like SAM-binding methyltransferase superfamily. RNA M5U methyltransferase family. RlmD subfamily.

The enzyme catalyses uridine(1939) in 23S rRNA + S-adenosyl-L-methionine = 5-methyluridine(1939) in 23S rRNA + S-adenosyl-L-homocysteine + H(+). In terms of biological role, catalyzes the formation of 5-methyl-uridine at position 1939 (m5U1939) in 23S rRNA. The sequence is that of 23S rRNA (uracil(1939)-C(5))-methyltransferase RlmD from Mannheimia succiniciproducens (strain KCTC 0769BP / MBEL55E).